A 415-amino-acid chain; its full sequence is Serine hydroxymethyltransferase 1 (415 aa).

(6S)-5,6,7,8-tetrahydrofolate is bound by residues leucine 122 and 126–128 (GHL). Position 230 is an N6-(pyridoxal phosphate)lysine (lysine 230).

The protein belongs to the SHMT family. Homodimer. Pyridoxal 5'-phosphate is required as a cofactor.

Its subcellular location is the cytoplasm. The enzyme catalyses (6R)-5,10-methylene-5,6,7,8-tetrahydrofolate + glycine + H2O = (6S)-5,6,7,8-tetrahydrofolate + L-serine. It functions in the pathway one-carbon metabolism; tetrahydrofolate interconversion. It participates in amino-acid biosynthesis; glycine biosynthesis; glycine from L-serine: step 1/1. Its function is as follows. Catalyzes the reversible interconversion of serine and glycine with tetrahydrofolate (THF) serving as the one-carbon carrier. This reaction serves as the major source of one-carbon groups required for the biosynthesis of purines, thymidylate, methionine, and other important biomolecules. Also exhibits THF-independent aldolase activity toward beta-hydroxyamino acids, producing glycine and aldehydes, via a retro-aldol mechanism. This chain is Serine hydroxymethyltransferase 1, found in Cupriavidus pinatubonensis (strain JMP 134 / LMG 1197) (Cupriavidus necator (strain JMP 134)).